A 346-amino-acid polypeptide reads, in one-letter code: FAS-associated factor 2 (346 aa).

At Lys-68 the chain carries N6-acetyllysine. A coiled-coil region spans residues 176-251 (SERLEREERN…EEKERKLECL (76 aa)). The interval 200–262 (ASLRADQEKE…PEPSPDDPDS (63 aa)) is disordered. Basic and acidic residues predominate over residues 204-249 (ADQEKERKKREERERKRRKEEEVQQQKLAEERRRQNLQEEKERKLE). Residues 258–340 (DDPDSVKIIF…GLSHTEVLFV (83 aa)) form the UBX domain.

As to quaternary structure, identified in a complex that contains SEL1L, OS9, FAF2/UBXD8, UBE2J1/UBC6E and AUP1. Interacts with YOD1. Interacts (via N-terminus) with UBQLN2 (via C-terminus). Interacts with PNPLA2 and UBAC2. Interacts with ZFAND2B; probably through VCP. Interacts with LMBR1L.

It localises to the cytoplasm. It is found in the lipid droplet. The protein resides in the endoplasmic reticulum. Plays an important role in endoplasmic reticulum-associated degradation (ERAD) that mediates ubiquitin-dependent degradation of misfolded endoplasmic reticulum proteins. By controlling the steady-state expression of the IGF1R receptor, indirectly regulates the insulin-like growth factor receptor signaling pathway. Involved in inhibition of lipid droplet degradation by binding to phospholipase PNPL2 and inhibiting its activity by promoting dissociation of PNPL2 from its endogenous activator, ABHD5 which inhibits the rate of triacylglycerol hydrolysis. Involved in stress granule disassembly: associates with ubiquitinated G3BP1 in response to heat shock, thereby promoting interaction between ubiquitinated G3BP1 and VCP, followed by G3BP1 extraction from stress granules and stress granule disassembly. The protein is FAS-associated factor 2 (Faf2) of Rattus norvegicus (Rat).